Here is a 740-residue protein sequence, read N- to C-terminus: Phosphoribosylformylglycinamidine synthase subunit PurL (740 aa).

The active site involves H49. ATP is bound by residues Y52 and K91. Residue E93 coordinates Mg(2+). Residues 94 to 97 (SHNH) and R116 each bind substrate. H95 serves as the catalytic Proton acceptor. Residue D117 participates in Mg(2+) binding. Q245 is a substrate binding site. A Mg(2+)-binding site is contributed by D273. 317–319 (ESQ) contributes to the substrate binding site. Residues D501 and G538 each coordinate ATP. N539 provides a ligand contact to Mg(2+). S541 serves as a coordination point for substrate.

This sequence belongs to the FGAMS family. Monomer. Part of the FGAM synthase complex composed of 1 PurL, 1 PurQ and 2 PurS subunits.

The protein resides in the cytoplasm. It carries out the reaction N(2)-formyl-N(1)-(5-phospho-beta-D-ribosyl)glycinamide + L-glutamine + ATP + H2O = 2-formamido-N(1)-(5-O-phospho-beta-D-ribosyl)acetamidine + L-glutamate + ADP + phosphate + H(+). It participates in purine metabolism; IMP biosynthesis via de novo pathway; 5-amino-1-(5-phospho-D-ribosyl)imidazole from N(2)-formyl-N(1)-(5-phospho-D-ribosyl)glycinamide: step 1/2. Part of the phosphoribosylformylglycinamidine synthase complex involved in the purines biosynthetic pathway. Catalyzes the ATP-dependent conversion of formylglycinamide ribonucleotide (FGAR) and glutamine to yield formylglycinamidine ribonucleotide (FGAM) and glutamate. The FGAM synthase complex is composed of three subunits. PurQ produces an ammonia molecule by converting glutamine to glutamate. PurL transfers the ammonia molecule to FGAR to form FGAM in an ATP-dependent manner. PurS interacts with PurQ and PurL and is thought to assist in the transfer of the ammonia molecule from PurQ to PurL. This Sulfurovum sp. (strain NBC37-1) protein is Phosphoribosylformylglycinamidine synthase subunit PurL.